Here is a 591-residue protein sequence, read N- to C-terminus: Frizzled and smoothened-like protein F (591 aa).

Residues 1–17 form the signal peptide; it reads MKILIIFIIFIISYISG. The Extracellular segment spans residues 18–244; the sequence is FEIPKGFGIG…KWDQLLTMSK (227 aa). The 148-residue stretch at 30 to 177 folds into the FZ domain; the sequence is IPDAECLNYI…GTFAVPCSDP (148 aa). Cystine bridges form between cysteine 35–cysteine 105, cysteine 48–cysteine 98, and cysteine 123–cysteine 174. 4 N-linked (GlcNAc...) asparagine glycosylation sites follow: asparagine 167, asparagine 187, asparagine 202, and asparagine 230. The chain crosses the membrane as a helical span at residues 245-265; that stretch reads ILSTISFILSLYNVLTFGIIN. The Cytoplasmic segment spans residues 266-275; it reads KKVSDPHKCT. Residues 276 to 296 traverse the membrane as a helical segment; the sequence is CFFSGSIALVNLCDIITYGIG. Residues 297 to 321 lie on the Extracellular side of the membrane; sequence YEELLCPEPGRSAKQQLDPVCGLTG. The chain crosses the membrane as a helical span at residues 322 to 342; sequence AFFHLGITYCVLWSMTMGLVL. At 343 to 353 the chain is on the cytoplasmic side; it reads YCSVKRQKWFK. A helical membrane pass occupies residues 354–374; sequence FNYFLIGNTTFTITTVVIAAA. Over 375–397 the chain is Extracellular; it reads TSKFEAGLGSIECWIRDRWYAIS. Residues 398–418 traverse the membrane as a helical segment; the sequence is LFWIPCGIALLIGSFCIIAVI. The Cytoplasmic portion of the chain corresponds to 419–442; sequence HEVYKTSKKSISNRNDLLQRELKP. Residues 443 to 463 form a helical membrane-spanning segment; that stretch reads LLIVIFISGSFLYLFIFFFDI. Topologically, residues 464–495 are extracellular; that stretch reads ERKFGGYRSAVEDYVLCLLNGSQEECFTTGPS. The N-linked (GlcNAc...) asparagine glycan is linked to asparagine 483. The helical transmembrane segment at 496-516 threads the bilayer; that stretch reads YVPYFLFYLVIRWFGIIFFLF. The Cytoplasmic portion of the chain corresponds to 517–591; the sequence is YGTSNIARKI…AVELESIKIN (75 aa). Positions 538 to 571 are enriched in low complexity; sequence SSISPKSTPKSSPKNSDSKINSNSTNNNNMILND. Positions 538–573 are disordered; the sequence is SSISPKSTPKSSPKNSDSKINSNSTNNNNMILNDNN.

It belongs to the G-protein coupled receptor Fz/Smo family.

Its subcellular location is the membrane. The chain is Frizzled and smoothened-like protein F (fslF) from Dictyostelium discoideum (Social amoeba).